Here is a 543-residue protein sequence, read N- to C-terminus: Plant intracellular Ras-group-related LRR protein 5 (543 aa).

LRR repeat units follow at residues 239 to 262 (LQDVTELDLSENRIMALPSTIGSL), 264 to 284 (YLTKLDLHSNQLINLPDAFGE), 285 to 307 (LSNLIDLDLHANQLKSLPSSFGN), 309 to 331 (TSLANLDLSSNMLKALPDCLGKL), 332 to 354 (ANLRRLIVETNELEELPYTIGSC), 356 to 377 (SLVELRLDFNQLKALPEAIGKL), 378 to 400 (EKLEILTLHYNRIKGLPTTVGSL), 402 to 424 (RLRELDVSFNEVEVIPENICFAT), 426 to 448 (LVKLNLSRNFADLRALPKSIGNL), and 449 to 470 (EMLEELDISSNQIRVLPDSFRC). The LRR 11; degenerate repeat unit spans residues 472 to 494 (SRLRVFHADETPLEFPPREVVKL). Positions 495-502 (GAQAVVKY) match the GVYW; degenerate motif.

Belongs to the SHOC2 family. As to expression, widely expressed.

Its function is as follows. Leucine-rich repeat protein that likely mediates protein interactions, possibly in the context of signal transduction. The sequence is that of Plant intracellular Ras-group-related LRR protein 5 (IRL5) from Oryza sativa subsp. japonica (Rice).